Consider the following 285-residue polypeptide: Guanylate kinase 2, chloroplastic/mitochondrial (285 aa).

Over residues 1-19 the composition is skewed to low complexity; the sequence is MLLTRRFSSALARSPLLPR. Residues 1-42 constitute a chloroplast and mitochondrion transit peptide; that stretch reads MLLTRRFSSALARSPLLPRSLPPPRAVPATPPAPRPPPRRLM. The tract at residues 1 to 66 is disordered; it reads MLLTRRFSSA…PPPPSGADKD (66 aa). Over residues 20 to 36 the composition is skewed to pro residues; it reads SLPPPRAVPATPPAPRP. Over residues 40–50 the composition is skewed to low complexity; that stretch reads RLMSSSSSGWH. In terms of domain architecture, Guanylate kinase-like spans 91 to 272; sequence PMILVISGPS…AVKQVESIID (182 aa). 98 to 105 contacts ATP; it reads GPSGVGKD. Catalysis depends on residues Arg130, Arg224, and Arg235. Asn255 provides a ligand contact to ATP.

Belongs to the guanylate kinase family. In terms of assembly, monomer.

It localises to the plastid. The protein localises to the chloroplast. It is found in the mitochondrion. The catalysed reaction is GMP + ATP = GDP + ADP. Functionally, essential for recycling GMP and indirectly, cGMP. Essential for chloroplast differentiation at early stage of leaf development. May not be involved in the synthesis and maintenance of the organellar DNA during leaf development. The polypeptide is Guanylate kinase 2, chloroplastic/mitochondrial (V2) (Oryza sativa subsp. japonica (Rice)).